The chain runs to 426 residues: Glutamate-1-semialdehyde 2,1-aminomutase (426 aa).

Lysine 265 is subject to N6-(pyridoxal phosphate)lysine.

Belongs to the class-III pyridoxal-phosphate-dependent aminotransferase family. HemL subfamily. As to quaternary structure, homodimer. Requires pyridoxal 5'-phosphate as cofactor.

The protein localises to the cytoplasm. It carries out the reaction (S)-4-amino-5-oxopentanoate = 5-aminolevulinate. It functions in the pathway porphyrin-containing compound metabolism; protoporphyrin-IX biosynthesis; 5-aminolevulinate from L-glutamyl-tRNA(Glu): step 2/2. The polypeptide is Glutamate-1-semialdehyde 2,1-aminomutase (Yersinia enterocolitica serotype O:8 / biotype 1B (strain NCTC 13174 / 8081)).